The sequence spans 623 residues: Glutathione import ATP-binding protein GsiA (623 aa).

ABC transporter domains follow at residues 15-269 (VENL…RALL) and 314-564 (LRVR…RKLL). ATP is bound by residues 49-56 (GESGSGKS) and 357-364 (GESGSGKS).

This sequence belongs to the ABC transporter superfamily. Glutathione importer (TC 3.A.1.5.11) family. As to quaternary structure, the complex is composed of two ATP-binding proteins (GsiA), two transmembrane proteins (GsiC and GsiD) and a solute-binding protein (GsiB).

The protein resides in the cell inner membrane. The enzyme catalyses glutathione(out) + ATP + H2O = glutathione(in) + ADP + phosphate + H(+). In terms of biological role, part of the ABC transporter complex GsiABCD involved in glutathione import. Responsible for energy coupling to the transport system. This chain is Glutathione import ATP-binding protein GsiA, found in Shigella dysenteriae serotype 1 (strain Sd197).